The sequence spans 417 residues: Divinyl chlorophyllide a 8-vinyl-reductase, chloroplastic (417 aa).

The N-terminal 49 residues, 1 to 49, are a transit peptide targeting the chloroplast; that stretch reads MSLCSSFNVFASYSPKPKTIFKDSKFISQFQVKSSPLASTFHTNESSTS.

As to expression, highly expressed in leaves, stems and flower buds. Detected in roots.

It is found in the plastid. The protein resides in the chloroplast. It carries out the reaction protochlorophyllide a + NADP(+) = 3,8-divinyl protochlorophyllide a + NADPH + H(+). Its pathway is porphyrin-containing compound metabolism; chlorophyll biosynthesis. In terms of biological role, catalyzes the conversion of divinyl chlorophyllide to monovinyl chlorophyllide. Reduces the 8-vinyl group of the tetrapyrrole to an ethyl group using NADPH as the reductant. The best substrate is (3,8-divinyl)-chlorophyllide a (DV-Chlidea). Very low activity with (3,8-divinyl)-protochlorophyllide a (DV-Pchlidea) and (3,8-divinyl)-magnesium-protoporphyrin IX monomethyl ester (DV-MPE). No activity with (3,8-divinyl)-chlorophyllide b (DV-Chlideb), (3,8-divinyl)-magnesium-protoporphyrin IX (DV-Mg-Proto) and either (3,8-divinyl)-chlorophyll a (DV-Chla) or b (DV-Chlb). This is Divinyl chlorophyllide a 8-vinyl-reductase, chloroplastic (DVR) from Arabidopsis thaliana (Mouse-ear cress).